A 301-amino-acid polypeptide reads, in one-letter code: Mitochondrial import receptor subunit TOM40 homolog (301 aa).

A compositionally biased stretch (polar residues) spans 1 to 19 (MATPTESELASPIPQTNPG). The disordered stretch occupies residues 1-20 (MATPTESELASPIPQTNPGS).

It belongs to the Tom40 family. Forms part of the preprotein translocase complex of the outer mitochondrial membrane (TOM complex). Interacts with mitochondrial targeting sequences. Ubiquitously expressed, but highly expressed in the pharyngeal muscles, the nerve ring, the intestine, gonadal sheath and in the tail hypodermis.

Its subcellular location is the mitochondrion outer membrane. In terms of biological role, channel-forming protein essential for import of protein precursors into mitochondria. Specifically required for nnt-1 accumulation in the mitochondria and may be involved in the secretion of daf-28/insulin from the mitochondria. Required for embryonic and larval development. This chain is Mitochondrial import receptor subunit TOM40 homolog, found in Caenorhabditis elegans.